We begin with the raw amino-acid sequence, 470 residues long: uncharacterized protein (470 aa).

Positions 1–24 (MKKLVGSLAAISVLSATGFSYVGY) are cleaved as a signal peptide.

This is an uncharacterized protein from Mycoplasma capricolum subsp. capricolum (strain California kid / ATCC 27343 / NCTC 10154).